The sequence spans 104 residues: Small ribosomal subunit protein bS6c (104 aa).

It belongs to the bacterial ribosomal protein bS6 family.

The protein resides in the plastid. The protein localises to the cyanelle. Its function is as follows. Binds together with bS18 to 16S ribosomal RNA. The chain is Small ribosomal subunit protein bS6c (rps6) from Cyanophora paradoxa.